The sequence spans 988 residues: Transposase for transposon Tn1546 (988 aa).

This sequence belongs to the transposase 7 family.

In terms of biological role, required for transposition of transposon Tn1546. This chain is Transposase for transposon Tn1546, found in Enterococcus faecium (Streptococcus faecium).